Here is a 23-residue protein sequence, read N- to C-terminus: Paralytic peptide 1 (23 aa).

C7 and C19 form a disulfide bridge.

This sequence belongs to the GBP/PSP1/paralytic peptide family. In terms of tissue distribution, hemolymph.

Its function is as follows. Causes rapid, rigid paralysis when injected into Lepidopteran larvae. The physiological role may be to reduce hemolymph loss following injury and promote wound healing. This is Paralytic peptide 1 from Spodoptera exigua (Beet armyworm).